The chain runs to 411 residues: Putative competence-damage inducible protein (411 aa).

This sequence belongs to the CinA family.

This chain is Putative competence-damage inducible protein, found in Desulforamulus reducens (strain ATCC BAA-1160 / DSM 100696 / MI-1) (Desulfotomaculum reducens).